A 216-amino-acid chain; its full sequence is Pyridoxine/pyridoxamine 5'-phosphate oxidase (216 aa).

Substrate is bound by residues 12 to 15 (RREY) and Lys-70. Residues 65-70 (RLVLLK), 80-81 (YT), Arg-86, Lys-87, and Gln-109 contribute to the FMN site. Residues Tyr-127, Arg-131, and Ser-135 each contribute to the substrate site. Residues 144 to 145 (QS) and Trp-189 contribute to the FMN site. Position 195-197 (195-197 (RMH)) interacts with substrate. An FMN-binding site is contributed by Arg-199.

Belongs to the pyridoxamine 5'-phosphate oxidase family. As to quaternary structure, homodimer. The cofactor is FMN.

The enzyme catalyses pyridoxamine 5'-phosphate + O2 + H2O = pyridoxal 5'-phosphate + H2O2 + NH4(+). It catalyses the reaction pyridoxine 5'-phosphate + O2 = pyridoxal 5'-phosphate + H2O2. It participates in cofactor metabolism; pyridoxal 5'-phosphate salvage; pyridoxal 5'-phosphate from pyridoxamine 5'-phosphate: step 1/1. Its pathway is cofactor metabolism; pyridoxal 5'-phosphate salvage; pyridoxal 5'-phosphate from pyridoxine 5'-phosphate: step 1/1. Functionally, catalyzes the oxidation of either pyridoxine 5'-phosphate (PNP) or pyridoxamine 5'-phosphate (PMP) into pyridoxal 5'-phosphate (PLP). The polypeptide is Pyridoxine/pyridoxamine 5'-phosphate oxidase (Sodalis glossinidius (strain morsitans)).